Consider the following 174-residue polypeptide: Shikimate kinase 2 (174 aa).

12-17 serves as a coordination point for ATP; it reads GCGKTT. 2 residues coordinate Mg(2+): Thr-16 and Asp-32. 3 residues coordinate substrate: Asp-34, Arg-58, and Gly-79. The interval 112–126 is LID domain; it reads EAFPEEGQRPTLTGK. Arg-120 serves as a coordination point for ATP. A substrate-binding site is contributed by Arg-139. Gln-155 contributes to the ATP binding site.

It belongs to the shikimate kinase family. AroL subfamily. In terms of assembly, monomer. Mg(2+) is required as a cofactor.

The protein localises to the cytoplasm. The catalysed reaction is shikimate + ATP = 3-phosphoshikimate + ADP + H(+). It functions in the pathway metabolic intermediate biosynthesis; chorismate biosynthesis; chorismate from D-erythrose 4-phosphate and phosphoenolpyruvate: step 5/7. In terms of biological role, catalyzes the specific phosphorylation of the 3-hydroxyl group of shikimic acid using ATP as a cosubstrate. The sequence is that of Shikimate kinase 2 from Enterobacter sp. (strain 638).